The sequence spans 451 residues: 2-succinylbenzoate--CoA ligase (451 aa).

The protein belongs to the ATP-dependent AMP-binding enzyme family. MenE subfamily.

It catalyses the reaction 2-succinylbenzoate + ATP + CoA = 2-succinylbenzoyl-CoA + AMP + diphosphate. The protein operates within quinol/quinone metabolism; 1,4-dihydroxy-2-naphthoate biosynthesis; 1,4-dihydroxy-2-naphthoate from chorismate: step 5/7. It functions in the pathway quinol/quinone metabolism; menaquinone biosynthesis. Functionally, converts 2-succinylbenzoate (OSB) to 2-succinylbenzoyl-CoA (OSB-CoA). In Lactococcus lactis subsp. lactis (strain IL1403) (Streptococcus lactis), this protein is 2-succinylbenzoate--CoA ligase.